Consider the following 272-residue polypeptide: HTH-type transcriptional repressor AllR (272 aa).

The interval 1-20 is disordered; sequence MTEVRRRGRPGQAEPTAQKG. One can recognise an HTH iclR-type domain in the interval 21–83; it reads AQALERGIAI…SQLGWWHIGL (63 aa). Positions 43–62 form a DNA-binding region, H-T-H motif; it reads VSDISGSLDLPLSTTFRLLK. The IclR-ED domain occupies 98 to 267; it reads VLSVAGPFMH…AKDISTALGL (170 aa). Glyoxylate is bound by residues 154–156, Asp-207, Cys-217, and 234–236; these read SGA and SIS.

Its function is as follows. Negative regulator of allantoin and glyoxylate utilization operons. Binds to the gcl promoter and to the allS-allA intergenic region. The sequence is that of HTH-type transcriptional repressor AllR (allR) from Salmonella paratyphi A (strain ATCC 9150 / SARB42).